A 397-amino-acid chain; its full sequence is MVEPQEGKTRFHDFNLAPSLMHAIHDLGFPYCTPIQAQVLGFTLRGQDAIGRAQTGTGKTAAFLISIITQLLQTPPPKERYMGEPRALIIAPTRELVVQIAKDAAALTKYTGLNVMTFVGGMDFDKQLKQLEARFCDILVATPGRLLDFNQRGEVHLDMVEVMVLDEADRMLDMGFIPQVRQIIRQTPHKGERQTLLFSATFTDDVMNLAKQWTVDPAIVEIEPENVASDTVEQHVYAVAGSDKYKLLYNLVAQNNWERVMVFANRKDEVRRIEERLTKDGISAAQMSGDVPQHKRIRTLEGFREGKIRVLVATDVAGRGIHIDGISHVINFTLPEDPDDYVHRIGRTGRAGASGTSISFAGEDDAFALPPIEELLGRKITCEMPPAELLKPVPRKH.

Residues 9–37 (TRFHDFNLAPSLMHAIHDLGFPYCTPIQA) carry the Q motif motif. A Helicase ATP-binding domain is found at 40–220 (LGFTLRGQDA…KQWTVDPAIV (181 aa)). 53 to 60 (AQTGTGKT) lines the ATP pocket. Positions 166–169 (DEAD) match the DEAD box motif. A Helicase C-terminal domain is found at 243-393 (DKYKLLYNLV…MPPAELLKPV (151 aa)).

This sequence belongs to the DEAD box helicase family. RhlB subfamily. Component of the RNA degradosome, which is a multiprotein complex involved in RNA processing and mRNA degradation.

The protein localises to the cytoplasm. The catalysed reaction is ATP + H2O = ADP + phosphate + H(+). In terms of biological role, DEAD-box RNA helicase involved in RNA degradation. Has RNA-dependent ATPase activity and unwinds double-stranded RNA. This chain is ATP-dependent RNA helicase RhlB, found in Pseudomonas aeruginosa (strain UCBPP-PA14).